Reading from the N-terminus, the 353-residue chain is Phospho-N-acetylmuramoyl-pentapeptide-transferase (353 aa).

The next 10 helical transmembrane spans lie at 24–44 (LGFF…ILWA), 66–86 (TPTM…VLCA), 88–108 (LGNL…FVGF), 129–149 (FGML…KGLD), 160–180 (PLFE…FLST), 192–212 (GLAS…VYVA), 229–249 (VGEL…FLWY), 256–276 (VFMG…NAIV), 281–301 (ILLV…ILQV), and 330–350 (KVIV…LLSL).

It belongs to the glycosyltransferase 4 family. MraY subfamily. It depends on Mg(2+) as a cofactor.

It localises to the cell inner membrane. The enzyme catalyses UDP-N-acetyl-alpha-D-muramoyl-L-alanyl-gamma-D-glutamyl-meso-2,6-diaminopimeloyl-D-alanyl-D-alanine + di-trans,octa-cis-undecaprenyl phosphate = di-trans,octa-cis-undecaprenyl diphospho-N-acetyl-alpha-D-muramoyl-L-alanyl-D-glutamyl-meso-2,6-diaminopimeloyl-D-alanyl-D-alanine + UMP. Its pathway is cell wall biogenesis; peptidoglycan biosynthesis. Catalyzes the initial step of the lipid cycle reactions in the biosynthesis of the cell wall peptidoglycan: transfers peptidoglycan precursor phospho-MurNAc-pentapeptide from UDP-MurNAc-pentapeptide onto the lipid carrier undecaprenyl phosphate, yielding undecaprenyl-pyrophosphoryl-MurNAc-pentapeptide, known as lipid I. This Helicobacter pylori (strain ATCC 700392 / 26695) (Campylobacter pylori) protein is Phospho-N-acetylmuramoyl-pentapeptide-transferase.